The primary structure comprises 66 residues: Beta-toxin Cb3 (66 aa).

Residues 1–66 (KEGYIVNYYD…VWPLPNKTCL (66 aa)) form the LCN-type CS-alpha/beta domain. 4 disulfide bridges follow: Cys12–Cys65, Cys16–Cys41, Cys25–Cys46, and Cys29–Cys48.

Belongs to the long (4 C-C) scorpion toxin superfamily. Sodium channel inhibitor family. Beta subfamily. Expressed by the venom gland.

The protein resides in the secreted. In terms of biological role, beta toxins bind voltage-independently at site-4 of sodium channels (Nav) and reduces peak current and shifts the voltage of activation toward more negative potentials thereby affecting sodium channel activation and promoting spontaneous and repetitive firing. Has an inhibitory effect on voltage-gated sodium channels hNav1.1/SCN1A, hNav1.2/SCN2A, hNav1.4/SCN4A and hNav1.6/SCN8A. Reduces the peak current of hNav1.5/SCN5A but does not shift its voltage of activation. Also affects the inactivation processes of hNav1.1/SCN1A, hNav1.4/SCN4A, hNav1.5/SCN5A and hNav1.6/SCN8A. This toxin is active against mammals and lethal to mice. The protein is Beta-toxin Cb3 of Centruroides baergi (Scorpion).